The following is an 883-amino-acid chain: Alanine--tRNA ligase (883 aa).

Zn(2+)-binding residues include His-560, His-564, Cys-665, and His-669.

This sequence belongs to the class-II aminoacyl-tRNA synthetase family. The cofactor is Zn(2+).

The protein localises to the cytoplasm. It catalyses the reaction tRNA(Ala) + L-alanine + ATP = L-alanyl-tRNA(Ala) + AMP + diphosphate. Functionally, catalyzes the attachment of alanine to tRNA(Ala) in a two-step reaction: alanine is first activated by ATP to form Ala-AMP and then transferred to the acceptor end of tRNA(Ala). Also edits incorrectly charged Ser-tRNA(Ala) and Gly-tRNA(Ala) via its editing domain. This Mesomycoplasma hyopneumoniae (strain 7448) (Mycoplasma hyopneumoniae) protein is Alanine--tRNA ligase.